We begin with the raw amino-acid sequence, 256 residues long: Thiazole synthase (256 aa).

Lys-95 (schiff-base intermediate with DXP) is an active-site residue. 1-deoxy-D-xylulose 5-phosphate-binding positions include Gly-156, 182-183, and 204-205; these read AG and NT.

This sequence belongs to the ThiG family. As to quaternary structure, homotetramer. Forms heterodimers with either ThiH or ThiS.

It localises to the cytoplasm. It catalyses the reaction [ThiS sulfur-carrier protein]-C-terminal-Gly-aminoethanethioate + 2-iminoacetate + 1-deoxy-D-xylulose 5-phosphate = [ThiS sulfur-carrier protein]-C-terminal Gly-Gly + 2-[(2R,5Z)-2-carboxy-4-methylthiazol-5(2H)-ylidene]ethyl phosphate + 2 H2O + H(+). The protein operates within cofactor biosynthesis; thiamine diphosphate biosynthesis. Catalyzes the rearrangement of 1-deoxy-D-xylulose 5-phosphate (DXP) to produce the thiazole phosphate moiety of thiamine. Sulfur is provided by the thiocarboxylate moiety of the carrier protein ThiS. In vitro, sulfur can be provided by H(2)S. The protein is Thiazole synthase of Photobacterium profundum (strain SS9).